Consider the following 217-residue polypeptide: Probable rhamnogalacturonan acetylesterase YesY (217 aa).

Serine 11 functions as the Nucleophile in the catalytic mechanism. Residues glutamate 178 and histidine 185 contribute to the active site.

It belongs to the 'GDSL' lipolytic enzyme family.

Its function is as follows. May play a role in the degradation of rhamnogalacturonan derived from plant cell walls. Probably has broad substrate specificity and may degrade several types of acetylated substrates. This Bacillus subtilis (strain 168) protein is Probable rhamnogalacturonan acetylesterase YesY (yesY).